The following is a 226-amino-acid chain: Probable transcriptional regulator RABBIT EARS (226 aa).

The segment at 55 to 77 (YSCSFCGREFKSAQALGGHMNVH) adopts a C2H2-type zinc-finger fold. Positions 80 to 102 (DRARLKQQSLSPSSTDQATPPEC) are disordered. Polar residues predominate over residues 85–97 (KQQSLSPSSTDQA). The EAR-like (transcriptional repression) motif lies at 212–216 (LDLEL).

In terms of tissue distribution, strongly expressed in inflorescences and flowers, and weakly in siliques, seedlings and roots. In flowers, it is expressed in petal primordia and their precursor cells. Also expressed in the lateral root caps and the basal cells of lateral roots.

Its subcellular location is the nucleus. In terms of biological role, probable transcriptional regulator essential for petal development. Required for the early development of the organ primordia of the second whorl. Acts downstream of AP1 and PTL. The protein is Probable transcriptional regulator RABBIT EARS (RBE) of Arabidopsis thaliana (Mouse-ear cress).